Reading from the N-terminus, the 629-residue chain is MFYPDPFDVIIIGGGHAGTEAAMAAARMGQQTLLLTHNIDTLGQMSCNPAIGGIGKGHLVKEVDALGGLMAKAIDQAGIQFRILNASKGPAVRATRAQADRVLYRQAVRTALENQPNLMIFQQAVEDLIVENDRVVGAVTQMGLKFRAKAVVLTVGTFLDGKIHIGLDNYSGGRAGDPPSIPLSRRLRELPLRVGRLKTGTPPRIDARTIDFSVLAQQHGDNPMPVFSFMGNASQHPQQVPCYITHTNEKTHDVIRSNLDRSPMYAGVIEGVGPRYCPSIEDKVMRFADRNQHQIFLEPEGLTSNEIYPNGISTSLPFDVQMQIVRSMQGMENAKIVRPGYAIEYDFFDPRDLKPTLESKFIQGLFFAGQINGTTGYEEAAAQGLLVGLNAARLSADKEGWAPARSQAYLGVLVDDLCTLGTKEPYRMFTSRAEYRLMLREDNADLRLTEIGRELGLVDDERWARFNEKLENIERERQRLKSTWVTPSAEAAAEVNAHLTAPLSREASGEDLLRRPEMTYEKLTTLTPFAPALTDEQAAEQVEIQVKYEGYIARQQDEIEKQLRNENTLLPATLDYRQVSGLSNEVIAKLNDHKPASIGQASRISGVTPAAISILLVWLKKQGMLRRSA.

FAD contacts are provided by residues 13-18 (GGGHAG), V125, and S180. Residue 273 to 287 (GPRYCPSIEDKVMRF) coordinates NAD(+). Q370 contributes to the FAD binding site.

It belongs to the MnmG family. Homodimer. Heterotetramer of two MnmE and two MnmG subunits. FAD serves as cofactor.

The protein localises to the cytoplasm. NAD-binding protein involved in the addition of a carboxymethylaminomethyl (cmnm) group at the wobble position (U34) of certain tRNAs, forming tRNA-cmnm(5)s(2)U34. In Shigella sonnei (strain Ss046), this protein is tRNA uridine 5-carboxymethylaminomethyl modification enzyme MnmG.